Reading from the N-terminus, the 347-residue chain is uncharacterized protein (347 aa).

Mn(2+)-binding residues include Asp-207, Asp-218, His-279, Glu-312, and Glu-326.

It belongs to the peptidase M24B family. Requires Mn(2+) as cofactor.

This is an uncharacterized protein from Methanocaldococcus jannaschii (strain ATCC 43067 / DSM 2661 / JAL-1 / JCM 10045 / NBRC 100440) (Methanococcus jannaschii).